Here is a 439-residue protein sequence, read N- to C-terminus: MQSYFNELEQVRYEGSQSTNPLAFHHYNPDEMILGKRMADHLRFAACYWHTFCWGGADMFGANAFDRPWQQPGDALALAKRKAEVAFEFFHKLNVPYYCFHDVDVSPEGASLQEYLNNFAVMTDVLAEKQAASGVKLLWGTANCFTHPRYGAGAATNPDPEVFSWAATQVFTAMNATRQLGGENYVLWGGREGYETLLNTDLRQEREQIGRFMQMVVEHKHKTGFQGTLLIEPKPQEPTKHQYDYDVATVYGFLKQFGLEKEIKVNIEANHATLAGHSFHHEIASAIALGIFGSVDANRGDPQLGWDTDQFPNSVEENTLVMFEILKAGGFTTGGLNFDAKVRRQSTDKYDLFYGHIGAMDTMALALKFAAKMIEDGQLDQIVAKRYAGWNSELGQQILQGKMSLEELSRYASQHNLNPQHQSGHQELLENKVNRYLFG.

Residues H101 and D104 contribute to the active site. 7 residues coordinate Mg(2+): E232, E268, H271, D296, D307, D309, and D339.

It belongs to the xylose isomerase family. Homotetramer. It depends on Mg(2+) as a cofactor.

Its subcellular location is the cytoplasm. It carries out the reaction alpha-D-xylose = alpha-D-xylulofuranose. This Yersinia pseudotuberculosis serotype O:1b (strain IP 31758) protein is Xylose isomerase.